The chain runs to 529 residues: Peptide chain release factor 3 (529 aa).

In terms of domain architecture, tr-type G spans 11–280 (ARRRTFAIIS…GLVEWAPSPM (270 aa)). GTP contacts are provided by residues 20 to 27 (SHPDAGKT), 88 to 92 (DTPGH), and 142 to 145 (NKLD).

Belongs to the TRAFAC class translation factor GTPase superfamily. Classic translation factor GTPase family. PrfC subfamily.

Its subcellular location is the cytoplasm. Increases the formation of ribosomal termination complexes and stimulates activities of RF-1 and RF-2. It binds guanine nucleotides and has strong preference for UGA stop codons. It may interact directly with the ribosome. The stimulation of RF-1 and RF-2 is significantly reduced by GTP and GDP, but not by GMP. The sequence is that of Peptide chain release factor 3 from Erwinia tasmaniensis (strain DSM 17950 / CFBP 7177 / CIP 109463 / NCPPB 4357 / Et1/99).